The chain runs to 358 residues: Putative spore germination protein YfkT (358 aa).

10 helical membrane-spanning segments follow: residues 10–30 (LFFGALYTLAVGLKHAPILMI), 36–56 (NAWHSYILGVVIVIPALWLMH), 81–101 (IIILLFSLYFLLINAHDIRFF), 107–127 (ILFLPRTPMAVLGGVIIFVAI), 143–163 (IFLFPFGILVLFLPFTLATQI), 179–199 (LQSGYYAFGTMGELIILPLLF), 210–230 (IFAILLGALLLAVMLFSSISV), 262–282 (IIAAFWIPVIMVKIAGSLYIV), 297–317 (AMYTPTGMFSVVCGFWFFLNT), and 326–346 (IKPIINVVISLLLPLLIYLII).

The protein belongs to the amino acid-polyamine-organocation (APC) superfamily. Spore germination protein (SGP) (TC 2.A.3.9) family.

Its subcellular location is the cell membrane. In terms of biological role, may be involved in spore germination. The sequence is that of Putative spore germination protein YfkT (yfkT) from Bacillus subtilis (strain 168).